Consider the following 199-residue polypeptide: Chaperone protein TorD (199 aa).

Belongs to the TorD/DmsD family. TorD subfamily.

The protein resides in the cytoplasm. Involved in the biogenesis of TorA. Acts on TorA before the insertion of the molybdenum cofactor and, as a result, probably favors a conformation of the apoenzyme that is competent for acquiring the cofactor. The protein is Chaperone protein TorD of Escherichia coli O6:H1 (strain CFT073 / ATCC 700928 / UPEC).